Here is a 235-residue protein sequence, read N- to C-terminus: Pathogen-related protein (235 aa).

This chain is Pathogen-related protein, found in Hordeum vulgare (Barley).